The following is a 246-amino-acid chain: 23S rRNA (guanosine-2'-O-)-methyltransferase RlmB (246 aa).

S-adenosyl-L-methionine contacts are provided by Gly-197, Ile-217, and Leu-226.

Belongs to the class IV-like SAM-binding methyltransferase superfamily. RNA methyltransferase TrmH family. RlmB subfamily.

The protein resides in the cytoplasm. The catalysed reaction is guanosine(2251) in 23S rRNA + S-adenosyl-L-methionine = 2'-O-methylguanosine(2251) in 23S rRNA + S-adenosyl-L-homocysteine + H(+). Its function is as follows. Specifically methylates the ribose of guanosine 2251 in 23S rRNA. In Haemophilus ducreyi (strain 35000HP / ATCC 700724), this protein is 23S rRNA (guanosine-2'-O-)-methyltransferase RlmB.